Reading from the N-terminus, the 235-residue chain is Large ribosomal subunit protein uL1 (235 aa).

The protein belongs to the universal ribosomal protein uL1 family. As to quaternary structure, part of the 50S ribosomal subunit.

Functionally, binds directly to 23S rRNA. The L1 stalk is quite mobile in the ribosome, and is involved in E site tRNA release. Protein L1 is also a translational repressor protein, it controls the translation of the L11 operon by binding to its mRNA. The sequence is that of Large ribosomal subunit protein uL1 from Prochlorococcus marinus subsp. pastoris (strain CCMP1986 / NIES-2087 / MED4).